Here is a 483-residue protein sequence, read N- to C-terminus: tRNA sulfurtransferase (483 aa).

The 105-residue stretch at 62 to 166 (PEICDALTRI…QDKLILVKAR (105 aa)) folds into the THUMP domain. ATP-binding positions include 184-185 (LI), Lys-266, Gly-288, and Gln-297. Cys-345 and Cys-457 are joined by a disulfide. Residues 405-483 (LADTDVLLDI…GYTNVKVYRP (79 aa)) enclose the Rhodanese domain. Catalysis depends on Cys-457, which acts as the Cysteine persulfide intermediate.

It belongs to the ThiI family.

The protein localises to the cytoplasm. The catalysed reaction is [ThiI sulfur-carrier protein]-S-sulfanyl-L-cysteine + a uridine in tRNA + 2 reduced [2Fe-2S]-[ferredoxin] + ATP + H(+) = [ThiI sulfur-carrier protein]-L-cysteine + a 4-thiouridine in tRNA + 2 oxidized [2Fe-2S]-[ferredoxin] + AMP + diphosphate. It catalyses the reaction [ThiS sulfur-carrier protein]-C-terminal Gly-Gly-AMP + S-sulfanyl-L-cysteinyl-[cysteine desulfurase] + AH2 = [ThiS sulfur-carrier protein]-C-terminal-Gly-aminoethanethioate + L-cysteinyl-[cysteine desulfurase] + A + AMP + 2 H(+). Its pathway is cofactor biosynthesis; thiamine diphosphate biosynthesis. Catalyzes the ATP-dependent transfer of a sulfur to tRNA to produce 4-thiouridine in position 8 of tRNAs, which functions as a near-UV photosensor. Also catalyzes the transfer of sulfur to the sulfur carrier protein ThiS, forming ThiS-thiocarboxylate. This is a step in the synthesis of thiazole, in the thiamine biosynthesis pathway. The sulfur is donated as persulfide by IscS. The sequence is that of tRNA sulfurtransferase from Yersinia pseudotuberculosis serotype O:1b (strain IP 31758).